A 937-amino-acid chain; its full sequence is Glycine dehydrogenase (decarboxylating) (937 aa).

At Lys686 the chain carries N6-(pyridoxal phosphate)lysine.

This sequence belongs to the GcvP family. In terms of assembly, the glycine cleavage system is composed of four proteins: P, T, L and H. Pyridoxal 5'-phosphate is required as a cofactor.

The enzyme catalyses N(6)-[(R)-lipoyl]-L-lysyl-[glycine-cleavage complex H protein] + glycine + H(+) = N(6)-[(R)-S(8)-aminomethyldihydrolipoyl]-L-lysyl-[glycine-cleavage complex H protein] + CO2. The glycine cleavage system catalyzes the degradation of glycine. The P protein binds the alpha-amino group of glycine through its pyridoxal phosphate cofactor; CO(2) is released and the remaining methylamine moiety is then transferred to the lipoamide cofactor of the H protein. This chain is Glycine dehydrogenase (decarboxylating), found in Mesorhizobium japonicum (strain LMG 29417 / CECT 9101 / MAFF 303099) (Mesorhizobium loti (strain MAFF 303099)).